The primary structure comprises 81 residues: ATP synthase subunit c (81 aa).

The next 2 helical transmembrane spans lie at 5–25 (IAAG…IGAG) and 57–77 (VGLV…FVFA).

It belongs to the ATPase C chain family. In terms of assembly, F-type ATPases have 2 components, F(1) - the catalytic core - and F(0) - the membrane proton channel. F(1) has five subunits: alpha(3), beta(3), gamma(1), delta(1), epsilon(1). F(0) has three main subunits: a(1), b(2) and c(10-14). The alpha and beta chains form an alternating ring which encloses part of the gamma chain. F(1) is attached to F(0) by a central stalk formed by the gamma and epsilon chains, while a peripheral stalk is formed by the delta and b chains.

The protein localises to the cell membrane. Functionally, f(1)F(0) ATP synthase produces ATP from ADP in the presence of a proton or sodium gradient. F-type ATPases consist of two structural domains, F(1) containing the extramembraneous catalytic core and F(0) containing the membrane proton channel, linked together by a central stalk and a peripheral stalk. During catalysis, ATP synthesis in the catalytic domain of F(1) is coupled via a rotary mechanism of the central stalk subunits to proton translocation. Its function is as follows. Key component of the F(0) channel; it plays a direct role in translocation across the membrane. A homomeric c-ring of between 10-14 subunits forms the central stalk rotor element with the F(1) delta and epsilon subunits. This Mycobacterium marinum (strain ATCC BAA-535 / M) protein is ATP synthase subunit c.